The primary structure comprises 301 residues: Tetrapeptide repeat homeobox protein 2 (301 aa).

Disordered stretches follow at residues 1–27 (MQDP…RTVY) and 273–301 (SLST…LLDL). Composition is skewed to basic and acidic residues over residues 16–26 (PPRRQRQERTV) and 281–292 (YKEEDGFVDKNH). Residues 20–79 (QRQERTVYTESQQKVLEFYFQKDQYPNYDQRLNLAEMLSLREQQLQVWFKNRRAKLARER) constitute a DNA-binding region (homeobox).

This sequence belongs to the paired homeobox family.

The protein localises to the nucleus. Functionally, transcription factor expressed after fertilization required for zygotic genome activation (ZGA), a critical event in early embryonic development during which the developmental control passes from maternally provided mRNAs to the expression of the zygotic genome after fertilization. Binds and activates expression of key ZGA marker genes, such as NANOGNB, ZSCAN4, DUXB, KLF5 and DPPA3. Binds to regulatory DNA sequences containing a 5'-TAATCC-3' sequence motif. The protein is Tetrapeptide repeat homeobox protein 2 of Homo sapiens (Human).